We begin with the raw amino-acid sequence, 96 residues long: Frd operon uncharacterized protein C (96 aa).

Belongs to the HupF/HypC family.

The protein is Frd operon uncharacterized protein C of Proteus vulgaris.